Reading from the N-terminus, the 197-residue chain is Xanthine phosphoribosyltransferase (197 aa).

2 residues coordinate xanthine: Leu20 and Asn27. 128-132 (ANGQA) is a 5-phospho-alpha-D-ribose 1-diphosphate binding site. Lys156 is a binding site for xanthine.

It belongs to the purine/pyrimidine phosphoribosyltransferase family. Xpt subfamily. Homodimer.

Its subcellular location is the cytoplasm. The catalysed reaction is XMP + diphosphate = xanthine + 5-phospho-alpha-D-ribose 1-diphosphate. The protein operates within purine metabolism; XMP biosynthesis via salvage pathway; XMP from xanthine: step 1/1. Converts the preformed base xanthine, a product of nucleic acid breakdown, to xanthosine 5'-monophosphate (XMP), so it can be reused for RNA or DNA synthesis. In Bacillus cereus (strain ATCC 14579 / DSM 31 / CCUG 7414 / JCM 2152 / NBRC 15305 / NCIMB 9373 / NCTC 2599 / NRRL B-3711), this protein is Xanthine phosphoribosyltransferase.